The following is a 699-amino-acid chain: MARTTPIERYRNIGIMAHIDAGKTTTTERILFYTGVSHKIGEVHEGTAVMDWMAQEQERGITITSAATTCFWKGMDGQRAEHRINIIDTPGHVDFTIEVERSLRVLDGAMAVFCAVGGVQPQSETVWRQANKYKVPRIAFVNKMDRQGANFKRVVDQIATKLRGNPVPVQLPIGEEDHFSGVIDLMKMKSINWDDALQGTRFTEEDIPPALQADAEAARHFMVEAIADADEDVMMKYLEGEEISIAELQAALRKATISGAVVPVLCGSAFKNKGVQAALDAVLDYLPSPVDIKPVEGTNPDNGEEIVRFADDSEPFSALAFKIATDPFVGQLTFFRVYSGVLTAGSTVLNPGRNQKERIGRVLQMHANERHEIKEVLAGDIAAAVGLKTAYTGDTLCDLNKPIALEQMEFPEPVIHVAVEPKTKADQEKMGIALGKLAQEDPSFRVRTDQESGQTIISGMGELHLEIIVDRMKREFGVEATVGAPQVAYRETIRKTVESEGKFVRQSGGRGQYGHVWLRLEPLEPGSGFVFENGVVGGTVPKEFINPTEKGVEEALENGIIAGFPVVDVKVTIFDGSYHDVDSSEAAFKIAGSMGFKAGAAKANPVLLEPIFAVEVVTPEEYMGDIIGDINSRRGMMQGMEDEAGAKLIRCEVPLAEMFGYATTVRSLSQGRATYTMQFEKYMEVPGHVAEAIVKKSQR.

In terms of domain architecture, tr-type G spans 8-290; the sequence is ERYRNIGIMA…AVLDYLPSPV (283 aa). Residues 17 to 24, 88 to 92, and 142 to 145 contribute to the GTP site; these read AHIDAGKT, DTPGH, and NKMD.

This sequence belongs to the TRAFAC class translation factor GTPase superfamily. Classic translation factor GTPase family. EF-G/EF-2 subfamily.

The protein localises to the cytoplasm. In terms of biological role, catalyzes the GTP-dependent ribosomal translocation step during translation elongation. During this step, the ribosome changes from the pre-translocational (PRE) to the post-translocational (POST) state as the newly formed A-site-bound peptidyl-tRNA and P-site-bound deacylated tRNA move to the P and E sites, respectively. Catalyzes the coordinated movement of the two tRNA molecules, the mRNA and conformational changes in the ribosome. The polypeptide is Elongation factor G (Acidithiobacillus ferrooxidans (strain ATCC 23270 / DSM 14882 / CIP 104768 / NCIMB 8455) (Ferrobacillus ferrooxidans (strain ATCC 23270))).